The chain runs to 682 residues: Methionine--tRNA ligase (682 aa).

A 'HIGH' region motif is present at residues 15 to 25 (PYANGAIHLGH). Residues C146, C149, C159, and C162 each contribute to the Zn(2+) site. The short motif at 331–335 (KMSKS) is the 'KMSKS' region element. An ATP-binding site is contributed by K334. In terms of domain architecture, tRNA-binding spans 580–682 (DFAKLDLRVA…QGVKPGMQVK (103 aa)).

Belongs to the class-I aminoacyl-tRNA synthetase family. MetG type 1 subfamily. Homodimer. Requires Zn(2+) as cofactor.

It is found in the cytoplasm. It catalyses the reaction tRNA(Met) + L-methionine + ATP = L-methionyl-tRNA(Met) + AMP + diphosphate. In terms of biological role, is required not only for elongation of protein synthesis but also for the initiation of all mRNA translation through initiator tRNA(fMet) aminoacylation. This chain is Methionine--tRNA ligase, found in Pasteurella multocida (strain Pm70).